A 79-amino-acid polypeptide reads, in one-letter code: Small ribosomal subunit protein uS17 (79 aa).

This sequence belongs to the universal ribosomal protein uS17 family. In terms of assembly, part of the 30S ribosomal subunit.

One of the primary rRNA binding proteins, it binds specifically to the 5'-end of 16S ribosomal RNA. This is Small ribosomal subunit protein uS17 from Bartonella henselae (strain ATCC 49882 / DSM 28221 / CCUG 30454 / Houston 1) (Rochalimaea henselae).